Reading from the N-terminus, the 483-residue chain is Pentatricopeptide repeat-containing protein At5g18950 (483 aa).

9 PPR repeats span residues 144-178 (EPTLLEQYVKCLSEEGLVEEAIEVYNVLKDMGISS), 179-213 (SVVTCNSVLLGCLKARKLDRFWELHKEMVESEFDS), 218-246 (CLIRALCDGGDVSEGYELLKQGLKQGLDP), 247-281 (GQYVYAKLISGFCEIGNYACMSEVLHTMIAWNHFP), 282-316 (SMYIYQKIIKGLCMNKKQLEAYCIFKNLKDKGYAP), 317-351 (DRVVYTTMIRGFCEKGWLGSARKLWFEMIKKGMRP), 352-386 (NEFAYNVMIHGHFKRGEISLVEAFYNEMLRNGYGG), 387-421 (TMLSCNTMIKGFCSHGKSDEAFEIFKNMSETGVTP), and 422-456 (NAITYNALIKGFCKENKVEKGLKLYKELKALGLKP).

It belongs to the PPR family. P subfamily.

The protein is Pentatricopeptide repeat-containing protein At5g18950 of Arabidopsis thaliana (Mouse-ear cress).